We begin with the raw amino-acid sequence, 354 residues long: Alternative oxidase, mitochondrial (354 aa).

A mitochondrion-targeting transit peptide spans 1–64; the sequence is MNSMSTTGPI…RFISSTPQSQ (64 aa). A helical membrane pass occupies residues 153–173; sequence FVFLESVAGVPGMVGGMLRHL. Fe cation-binding residues include glutamate 157, glutamate 196, and histidine 199. The chain crosses the membrane as a helical span at residues 215-235; the sequence is LMVLGAQGVFFNGFFLSYLIS. 3 residues coordinate Fe cation: glutamate 247, glutamate 302, and histidine 305. The segment at 333–354 is disordered; sequence KPHPGKGIKHLKTTGWEREEVV. Over residues 335–344 the composition is skewed to basic residues; sequence HPGKGIKHLK.

It belongs to the alternative oxidase family. Fe cation is required as a cofactor.

Its subcellular location is the mitochondrion inner membrane. Functionally, catalyzes cyanide-resistant oxygen consumption. May increase respiration when the cytochrome respiratory pathway is restricted, or in response to low temperatures. This chain is Alternative oxidase, mitochondrial (alxA), found in Emericella nidulans (strain FGSC A4 / ATCC 38163 / CBS 112.46 / NRRL 194 / M139) (Aspergillus nidulans).